Consider the following 202-residue polypeptide: Protein DEHYDRATION-INDUCED 19 homolog 5 (202 aa).

Residues 88–97 (SHLLKRRKPS) are compositionally biased toward basic residues. The interval 88–120 (SHLLKRRKPSRPSSSWPTPSNNSDPYFEGPPQY) is disordered. Positions 98 to 112 (RPSSSWPTPSNNSDP) are enriched in low complexity.

The protein belongs to the Di19 family.

The protein is Protein DEHYDRATION-INDUCED 19 homolog 5 (DI19-5) of Oryza sativa subsp. japonica (Rice).